A 341-amino-acid chain; its full sequence is HTH-type transcriptional repressor PurR (341 aa).

The region spanning 2–56 is the HTH lacI-type domain; it reads ATIKDVAKRANVSTTTVSHVINKTRFVAEETRNAVWAAIKELHYSPSAVARSLKV. The H-T-H motif DNA-binding region spans 4 to 23; the sequence is IKDVAKRANVSTTTVSHVIN. Residues 48–56 mediate DNA binding; the sequence is SAVARSLKV. Residues tyrosine 73, arginine 190, threonine 192, phenylalanine 221, and aspartate 275 each contribute to the hypoxanthine site.

In terms of assembly, homodimer.

It participates in purine metabolism; purine nucleotide biosynthesis [regulation]. Functionally, is the main repressor of the genes involved in the de novo synthesis of purine nucleotides, regulating purB, purC, purEK, purF, purHD, purL, purMN and guaBA expression. PurR is allosterically activated to bind its cognate DNA by binding the purine corepressors, hypoxanthine or guanine, thereby effecting transcription repression. In Salmonella arizonae (strain ATCC BAA-731 / CDC346-86 / RSK2980), this protein is HTH-type transcriptional repressor PurR.